The chain runs to 366 residues: Beta sliding clamp (366 aa).

The protein belongs to the beta sliding clamp family. As to quaternary structure, forms a ring-shaped head-to-tail homodimer around DNA which binds and tethers DNA polymerases and other proteins to the DNA. The DNA replisome complex has a single clamp-loading complex (3 tau and 1 each of delta, delta', psi and chi subunits) which binds 3 Pol III cores (1 core on the leading strand and 2 on the lagging strand) each with a beta sliding clamp dimer. Additional proteins in the replisome are other copies of gamma, psi and chi, Ssb, DNA helicase and RNA primase.

Its subcellular location is the cytoplasm. Its function is as follows. Confers DNA tethering and processivity to DNA polymerases and other proteins. Acts as a clamp, forming a ring around DNA (a reaction catalyzed by the clamp-loading complex) which diffuses in an ATP-independent manner freely and bidirectionally along dsDNA. Initially characterized for its ability to contact the catalytic subunit of DNA polymerase III (Pol III), a complex, multichain enzyme responsible for most of the replicative synthesis in bacteria; Pol III exhibits 3'-5' exonuclease proofreading activity. The beta chain is required for initiation of replication as well as for processivity of DNA replication. The protein is Beta sliding clamp (dnaN) of Chlamydia pneumoniae (Chlamydophila pneumoniae).